The primary structure comprises 248 residues: Adenosylcobinamide-GDP ribazoletransferase (248 aa).

Helical transmembrane passes span L28–L48, V103–V123, L126–V146, A169–M189, M193–L213, and V225–A245.

Belongs to the CobS family. Requires Mg(2+) as cofactor.

It localises to the cell inner membrane. The catalysed reaction is alpha-ribazole + adenosylcob(III)inamide-GDP = adenosylcob(III)alamin + GMP + H(+). The enzyme catalyses alpha-ribazole 5'-phosphate + adenosylcob(III)inamide-GDP = adenosylcob(III)alamin 5'-phosphate + GMP + H(+). The protein operates within cofactor biosynthesis; adenosylcobalamin biosynthesis; adenosylcobalamin from cob(II)yrinate a,c-diamide: step 7/7. Functionally, joins adenosylcobinamide-GDP and alpha-ribazole to generate adenosylcobalamin (Ado-cobalamin). Also synthesizes adenosylcobalamin 5'-phosphate from adenosylcobinamide-GDP and alpha-ribazole 5'-phosphate. The chain is Adenosylcobinamide-GDP ribazoletransferase from Chlorobium phaeobacteroides (strain BS1).